A 465-amino-acid polypeptide reads, in one-letter code: Argininosuccinate lyase (465 aa).

Belongs to the lyase 1 family. Argininosuccinate lyase subfamily.

The protein resides in the cytoplasm. It carries out the reaction 2-(N(omega)-L-arginino)succinate = fumarate + L-arginine. Its pathway is amino-acid biosynthesis; L-arginine biosynthesis; L-arginine from L-ornithine and carbamoyl phosphate: step 3/3. This chain is Argininosuccinate lyase, found in Hyphomonas neptunium (strain ATCC 15444).